Here is a 215-residue protein sequence, read N- to C-terminus: Large ribosomal subunit protein uL3 (215 aa).

At Gln-153 the chain carries N5-methylglutamine.

The protein belongs to the universal ribosomal protein uL3 family. As to quaternary structure, part of the 50S ribosomal subunit. Forms a cluster with proteins L14 and L19. Methylated by PrmB.

Functionally, one of the primary rRNA binding proteins, it binds directly near the 3'-end of the 23S rRNA, where it nucleates assembly of the 50S subunit. This is Large ribosomal subunit protein uL3 from Nitrosococcus oceani (strain ATCC 19707 / BCRC 17464 / JCM 30415 / NCIMB 11848 / C-107).